Reading from the N-terminus, the 405-residue chain is Zinc finger protein ubi-d4 (405 aa).

Disordered stretches follow at residues 80 to 147 (RKKR…GEFP), 165 to 194 (DDLD…GGAR), 210 to 230 (ACDN…VCGK), and 248 to 280 (AEEE…PDGL). Composition is skewed to basic and acidic residues over residues 100–110 (PDTDQTLKKEG) and 126–140 (DPLE…RMDD). Positions 165 to 174 (DDLDDEDYEE) are enriched in acidic residues. The C2H2-type; atypical zinc finger occupies 209 to 246 (YACDNSYKQKHSLKPPDRVCGKRYKNRPGLSYHYAHSH). Over residues 267–277 (RSEEQKSKKGP) the composition is skewed to basic and acidic residues. 2 PHD-type zinc fingers span residues 284 to 344 (NNYC…CKCC) and 341 to 391 (CKCC…CLDL).

The protein belongs to the requiem/DPF family.

The protein localises to the cytoplasm. It localises to the nucleus. Functionally, may be a transcription factor required for the apoptosis response following survival factor withdrawal from myeloid cells. Might also have a role in the development and maturation of lymphoid cells. In Gallus gallus (Chicken), this protein is Zinc finger protein ubi-d4 (REQ).